The following is a 302-amino-acid chain: MAFAKAQKTKAYFKRYQVKFKRRREGKTDYRARIRLINQDKNKYNTPKYRFVVRTSNKDITAQIISASIAGDLVLASAYSHELPQYGLEVGLTNYAAAYCTGLLLARRVLKMLEMDAEYEGNVEATGEDYSVEPADTRRPFRALLDVGLIRTTTGNRVFGALKGALDGGLDIPHSDKRFAGYAKNGQQLDVEVHRKYIFGGHVAAYMRTLMEDEPEKYQSHFSEYIKKGIEADELEGLYKKVHAAIRANPIAKKSDKPQPKAHKRYNLKKLTYDERKARLVERLNALNSAADGDDDDDEDDE.

The protein belongs to the universal ribosomal protein uL18 family. As to quaternary structure, component of the large ribosomal subunit (LSU).

It localises to the cytoplasm. The protein localises to the nucleus. Component of the ribosome, a large ribonucleoprotein complex responsible for the synthesis of proteins in the cell. The small ribosomal subunit (SSU) binds messenger RNAs (mRNAs) and translates the encoded message by selecting cognate aminoacyl-transfer RNA (tRNA) molecules. The large subunit (LSU) contains the ribosomal catalytic site termed the peptidyl transferase center (PTC), which catalyzes the formation of peptide bonds, thereby polymerizing the amino acids delivered by tRNAs into a polypeptide chain. The nascent polypeptides leave the ribosome through a tunnel in the LSU and interact with protein factors that function in enzymatic processing, targeting, and the membrane insertion of nascent chains at the exit of the ribosomal tunnel. This Cucumis sativus (Cucumber) protein is Large ribosomal subunit protein uL18 (RPL5).